The sequence spans 164 residues: Endoribonuclease YbeY (164 aa).

Zn(2+)-binding residues include histidine 125, histidine 129, and histidine 135.

It belongs to the endoribonuclease YbeY family. The cofactor is Zn(2+).

Its subcellular location is the cytoplasm. In terms of biological role, single strand-specific metallo-endoribonuclease involved in late-stage 70S ribosome quality control and in maturation of the 3' terminus of the 16S rRNA. The sequence is that of Endoribonuclease YbeY from Paramagnetospirillum magneticum (strain ATCC 700264 / AMB-1) (Magnetospirillum magneticum).